The sequence spans 676 residues: DNA ligase (676 aa).

Residues 39-43 (DYVYD), 88-91 (SLND), and Glu-118 each bind NAD(+). The N6-AMP-lysine intermediate role is filled by Lys-120. Residues Arg-141, Glu-175, Lys-291, and Lys-315 each coordinate NAD(+). Zn(2+)-binding residues include Cys-409, Cys-412, Cys-427, and Cys-432. The 82-residue stretch at 595-676 (EVESPFKDKT…MVDALDASHF (82 aa)) folds into the BRCT domain.

The protein belongs to the NAD-dependent DNA ligase family. LigA subfamily. The cofactor is Mg(2+). Mn(2+) serves as cofactor.

It carries out the reaction NAD(+) + (deoxyribonucleotide)n-3'-hydroxyl + 5'-phospho-(deoxyribonucleotide)m = (deoxyribonucleotide)n+m + AMP + beta-nicotinamide D-nucleotide.. In terms of biological role, DNA ligase that catalyzes the formation of phosphodiester linkages between 5'-phosphoryl and 3'-hydroxyl groups in double-stranded DNA using NAD as a coenzyme and as the energy source for the reaction. It is essential for DNA replication and repair of damaged DNA. The polypeptide is DNA ligase (Enterococcus faecalis (strain ATCC 700802 / V583)).